A 63-amino-acid polypeptide reads, in one-letter code: uncharacterized protein (63 aa).

This is an uncharacterized protein from Rickettsia conorii (strain ATCC VR-613 / Malish 7).